Here is a 711-residue protein sequence, read N- to C-terminus: Choline transporter-like protein 2 (711 aa).

Residues 1 to 33 (MGDERPHYYGKHGTPQKYDPTFKGPIYNRGCTD) are Cytoplasmic-facing. Position 14 is a phosphothreonine (threonine 14). The helical transmembrane segment at 34–54 (VICCVFLLVAIVGYVAVGIIA) threads the bilayer. Residues 55-232 (WTHGDPRKVI…RIFEDYTVSW (178 aa)) are Extracellular-facing. 2 N-linked (GlcNAc...) asparagine glycosylation sites follow: asparagine 187 and asparagine 200. Residues 233-253 (YWIIIGLVIAMAMSLLFIILL) traverse the membrane as a helical segment. Residues 254–256 (RFL) are Cytoplasmic-facing. The helical transmembrane segment at 257 to 277 (AGIMVWVMIIMVILVLGYGIF) threads the bilayer. The Extracellular segment spans residues 278–315 (HCYMEYSRLRGEAGSDVSLVDLGFQTDFRVYLHLRQTW). Residues 316-336 (LAFMIILSILEVIIILLLIFL) traverse the membrane as a helical segment. Topologically, residues 337–364 (RKRILIAIALIKEASRAVGYVMCTMLYP) are cytoplasmic. A helical transmembrane segment spans residues 365-385 (LVTFFLLCLCIAYWASTAVFL). Residues 386–440 (STSNEAVYKIFDDGLCPFTAKTCNPETFPSSNESRQCPNARCQFAFYGGESGYHR) are Extracellular-facing. The N-linked (GlcNAc...) asparagine glycan is linked to asparagine 417. Residues 441–461 (ALLGLQIFNAFMFFWLANFVL) form a helical membrane-spanning segment. Residues 462–504 (ALGQVTLAGAFASYYWALRKPDDLPAFPLFSAFGRALRYHTGS) lie on the Cytoplasmic side of the membrane. Residues 505-525 (LAFGALILAIVQIIRVILEYL) traverse the membrane as a helical segment. The Extracellular portion of the chain corresponds to 526-563 (DQRLKAAENKFAKCLMTCLKCCFWCLEKFIKFLNRNAY). A helical membrane pass occupies residues 564 to 584 (IMIAIYGTNFCTSARNAFFLL). The Cytoplasmic segment spans residues 585 to 599 (MRNIIRVAVLDKVTD). The helical transmembrane segment at 600–620 (FLFLLGKLLIVGSVGILAFFF) threads the bilayer. Residues 621 to 638 (FTHRIRIVQDTAPPLNYY) are Extracellular-facing. A helical membrane pass occupies residues 639 to 659 (WVPILTVIVGSYLIAHGFFSV). Residues 660–711 (YGMCVDTLFLCFCEDLERNDGSQERPYFMSPELRDILLKGSAEEGKRAEAEE) are Cytoplasmic-facing.

This sequence belongs to the CTL (choline transporter-like) family. As to quaternary structure, interacts with COCH. In terms of processing, N-glycosylated.

The protein localises to the cell membrane. The protein resides in the mitochondrion outer membrane. It carries out the reaction choline(out) + n H(+)(in) = choline(in) + n H(+)(out). The enzyme catalyses ethanolamine(out) + n H(+)(in) = ethanolamine(in) + n H(+)(out). Functionally, choline/H+ antiporter, mainly in mitochodria. Also acts as a low-affinity ethanolamine/H+ antiporter, regulating the supply of extracellular ethanolamine (Etn) for the CDP-Etn pathway, redistribute intracellular Etn and balance the CDP-Cho and CDP-Etn arms of the Kennedy pathway. This chain is Choline transporter-like protein 2 (SLC44A2), found in Pongo abelii (Sumatran orangutan).